The chain runs to 381 residues: Queuine tRNA-ribosyltransferase (381 aa).

Residue Asp-89 is the Proton acceptor of the active site. Substrate-binding positions include 89 to 93, Asp-143, Gln-187, and Gly-214; that span reads DSGGF. The RNA binding stretch occupies residues 245–251; that stretch reads GVGKPED. Asp-264 (nucleophile) is an active-site residue. An RNA binding; important for wobble base 34 recognition region spans residues 269–273; it reads TRNAR. Residues Cys-302, Cys-304, Cys-307, and His-333 each coordinate Zn(2+).

The protein belongs to the queuine tRNA-ribosyltransferase family. As to quaternary structure, homodimer. Within each dimer, one monomer is responsible for RNA recognition and catalysis, while the other monomer binds to the replacement base PreQ1. Requires Zn(2+) as cofactor.

It catalyses the reaction 7-aminomethyl-7-carbaguanine + guanosine(34) in tRNA = 7-aminomethyl-7-carbaguanosine(34) in tRNA + guanine. It participates in tRNA modification; tRNA-queuosine biosynthesis. Its function is as follows. Catalyzes the base-exchange of a guanine (G) residue with the queuine precursor 7-aminomethyl-7-deazaguanine (PreQ1) at position 34 (anticodon wobble position) in tRNAs with GU(N) anticodons (tRNA-Asp, -Asn, -His and -Tyr). Catalysis occurs through a double-displacement mechanism. The nucleophile active site attacks the C1' of nucleotide 34 to detach the guanine base from the RNA, forming a covalent enzyme-RNA intermediate. The proton acceptor active site deprotonates the incoming PreQ1, allowing a nucleophilic attack on the C1' of the ribose to form the product. After dissociation, two additional enzymatic reactions on the tRNA convert PreQ1 to queuine (Q), resulting in the hypermodified nucleoside queuosine (7-(((4,5-cis-dihydroxy-2-cyclopenten-1-yl)amino)methyl)-7-deazaguanosine). The polypeptide is Queuine tRNA-ribosyltransferase (Pectobacterium atrosepticum (strain SCRI 1043 / ATCC BAA-672) (Erwinia carotovora subsp. atroseptica)).